An 892-amino-acid polypeptide reads, in one-letter code: Translation initiation factor IF-2 (892 aa).

Basic and acidic residues-rich tracts occupy residues 93-159 and 166-216; these read VKRD…KDKV and DMTK…EENK. The disordered stretch occupies residues 93–304; that stretch reads VKRDPQEAER…SSLQQGFQKP (212 aa). Over residues 254 to 269 the composition is skewed to basic residues; the sequence is GRGRNAKAARPAKKGK. The segment covering 270 to 282 has biased composition (basic and acidic residues); sequence HAESKADREEARA. One can recognise a tr-type G domain in the interval 391–560; the sequence is PRAPVVTIMG…LLQAEVLELK (170 aa). The G1 stretch occupies residues 400–407; sequence GHVDHGKT. 400-407 is a GTP binding site; it reads GHVDHGKT. The segment at 425 to 429 is G2; it reads GITQH. Positions 446-449 are G3; sequence DTPG. GTP-binding positions include 446 to 450 and 500 to 503; these read DTPGH and NKID. Residues 500–503 are G4; sequence NKID. The G5 stretch occupies residues 536-538; it reads SAK.

It belongs to the TRAFAC class translation factor GTPase superfamily. Classic translation factor GTPase family. IF-2 subfamily.

The protein resides in the cytoplasm. Functionally, one of the essential components for the initiation of protein synthesis. Protects formylmethionyl-tRNA from spontaneous hydrolysis and promotes its binding to the 30S ribosomal subunits. Also involved in the hydrolysis of GTP during the formation of the 70S ribosomal complex. The chain is Translation initiation factor IF-2 from Salmonella gallinarum (strain 287/91 / NCTC 13346).